We begin with the raw amino-acid sequence, 398 residues long: Membrane-spanning 4-domains subfamily A member 18 (398 aa).

Helical transmembrane passes span 156–176, 178–198, 218–238, and 251–271; these read LGAI…NPVL, YYPF…SYIV, SISF…IIIT, and AVSG…CVVS. Residues 316–346 are disordered; it reads TGPVSATNGPVNTTIHPVNTTTSPVNTTTSP. Positions 319–331 are enriched in polar residues; the sequence is VSATNGPVNTTIH. A compositionally biased stretch (low complexity) spans 332–346; it reads PVNTTTSPVNTTTSP.

It belongs to the MS4A family.

Its subcellular location is the membrane. In Homo sapiens (Human), this protein is Membrane-spanning 4-domains subfamily A member 18 (MS4A18).